Consider the following 458-residue polypeptide: Bifunctional protein GlmU (458 aa).

Positions 1–229 are pyrophosphorylase; the sequence is MNKFAIVLAA…FDESLGVNDR (229 aa). Residues 8-11, lysine 22, glutamine 72, and 77-78 contribute to the UDP-N-acetyl-alpha-D-glucosamine site; these read LAAG and GT. Aspartate 102 is a Mg(2+) binding site. The UDP-N-acetyl-alpha-D-glucosamine site is built by glycine 139, glutamate 154, asparagine 169, and asparagine 227. Asparagine 227 lines the Mg(2+) pocket. Positions 230 to 250 are linker; the sequence is VALSQAEATMRKRINHEHMVN. An N-acetyltransferase region spans residues 251–458; that stretch reads GVTLIDPATT…AKKMPHYRGQ (208 aa). UDP-N-acetyl-alpha-D-glucosamine is bound by residues arginine 332 and lysine 350. Residue histidine 362 is the Proton acceptor of the active site. UDP-N-acetyl-alpha-D-glucosamine-binding residues include tyrosine 365 and asparagine 376. The acetyl-CoA site is built by alanine 379, serine 404, alanine 422, and arginine 439.

This sequence in the N-terminal section; belongs to the N-acetylglucosamine-1-phosphate uridyltransferase family. In the C-terminal section; belongs to the transferase hexapeptide repeat family. As to quaternary structure, homotrimer. The cofactor is Mg(2+).

The protein localises to the cytoplasm. It catalyses the reaction alpha-D-glucosamine 1-phosphate + acetyl-CoA = N-acetyl-alpha-D-glucosamine 1-phosphate + CoA + H(+). The catalysed reaction is N-acetyl-alpha-D-glucosamine 1-phosphate + UTP + H(+) = UDP-N-acetyl-alpha-D-glucosamine + diphosphate. It functions in the pathway nucleotide-sugar biosynthesis; UDP-N-acetyl-alpha-D-glucosamine biosynthesis; N-acetyl-alpha-D-glucosamine 1-phosphate from alpha-D-glucosamine 6-phosphate (route II): step 2/2. The protein operates within nucleotide-sugar biosynthesis; UDP-N-acetyl-alpha-D-glucosamine biosynthesis; UDP-N-acetyl-alpha-D-glucosamine from N-acetyl-alpha-D-glucosamine 1-phosphate: step 1/1. It participates in bacterial outer membrane biogenesis; LPS lipid A biosynthesis. Its function is as follows. Catalyzes the last two sequential reactions in the de novo biosynthetic pathway for UDP-N-acetylglucosamine (UDP-GlcNAc). The C-terminal domain catalyzes the transfer of acetyl group from acetyl coenzyme A to glucosamine-1-phosphate (GlcN-1-P) to produce N-acetylglucosamine-1-phosphate (GlcNAc-1-P), which is converted into UDP-GlcNAc by the transfer of uridine 5-monophosphate (from uridine 5-triphosphate), a reaction catalyzed by the N-terminal domain. The polypeptide is Bifunctional protein GlmU (Lactococcus lactis subsp. cremoris (strain MG1363)).